Here is a 391-residue protein sequence, read N- to C-terminus: MSLNPRDVVIVDFGRTPMGRSKGGMHRNTRAETMSAHLISKLLERNPKVDPAEVEDVIWGCVNQTLEQGWNIARMASLMTQIPHTSAAQTVSRLCGSSMSALHTAAQAIQTGNGDVFVIGGVEHMGHVGMMHGVDPNPHLSLYAAKASGMMGLTAEMLGKMHGISREAQDKFGARSHQLAWKATQEGKFKDEIIPMEGYDENGFLKVFDFDETIRPETTVETLAQLKPAFNPKGGTVTAGTSSQITDGASCMIVMSAQRAQDLGIQPMAVIRSMAVAGVDPAIMGYGPVPSTNKALKRAGLTIADIDFVELNEAFAAQALPVLKDLKLLDKMDEKVNLHGGAIALGHPFGCSGARISGTLLNVMKQNGGTLGVSTMCVGLGQGITTVFERV.

Cysteine 95 acts as the Acyl-thioester intermediate in catalysis. Residues histidine 347 and cysteine 377 each act as proton acceptor in the active site.

It belongs to the thiolase-like superfamily. Thiolase family. As to quaternary structure, heterotetramer of two alpha chains (FadB) and two beta chains (FadA).

The protein resides in the cytoplasm. It catalyses the reaction an acyl-CoA + acetyl-CoA = a 3-oxoacyl-CoA + CoA. The protein operates within lipid metabolism; fatty acid beta-oxidation. Catalyzes the final step of fatty acid oxidation in which acetyl-CoA is released and the CoA ester of a fatty acid two carbons shorter is formed. This is 3-ketoacyl-CoA thiolase from Pseudomonas aeruginosa (strain UCBPP-PA14).